Here is a 327-residue protein sequence, read N- to C-terminus: MSNPDVDLDSIIDRLLEVRGSRPGRQVQLSEDEIRFLCNKAREIFISQPILLELEAPLKICGDIHGQYYDLLRLFEYGGFPPEANYLFLGDYVDRGKQSLEVICLLLAYKIKYPENFFILRGNHECASINRIYGFYDECKRRYNIKLWKTFTDCFNCLPIAAIIDEKIFTMHGGLSPDLNSMDQIQRIMRPTDVPDTGLLCDLLWSDPDKDLTGWGDNDRGVSFTFGPDVVSRFLHKHDMDLVCRAHQVVEDGYEFFSKRQLVTLFSAPNYCGEFDNAGAMMSVDESLLCSFQILKPAEKKQRYGYQGSSQNWHMTPPRKNKTGNSK.

Mn(2+) is bound by residues aspartate 63, histidine 65, aspartate 91, and asparagine 123. The active-site Proton donor is histidine 124. Residues histidine 172 and histidine 247 each coordinate Mn(2+). The interval 305–327 (GYQGSSQNWHMTPPRKNKTGNSK) is disordered. Residue threonine 316 is modified to Phosphothreonine; by CDC2. The segment covering 317–327 (PPRKNKTGNSK) has biased composition (basic residues).

The protein belongs to the PPP phosphatase family. PP-1 subfamily. In terms of assembly, oligomer. Requires Mn(2+) as cofactor.

The protein resides in the nucleus. It catalyses the reaction O-phospho-L-seryl-[protein] + H2O = L-seryl-[protein] + phosphate. The enzyme catalyses O-phospho-L-threonyl-[protein] + H2O = L-threonyl-[protein] + phosphate. Its function is as follows. Essential role in cell cycle control. PP1 is perhaps required for exit from mitosis. The protein is Serine/threonine-protein phosphatase PP1-1 (dis2) of Schizosaccharomyces pombe (strain 972 / ATCC 24843) (Fission yeast).